We begin with the raw amino-acid sequence, 500 residues long: Aspartyl/glutamyl-tRNA(Asn/Gln) amidotransferase subunit B (500 aa).

The protein belongs to the GatB/GatE family. GatB subfamily. In terms of assembly, heterotrimer of A, B and C subunits.

It catalyses the reaction L-glutamyl-tRNA(Gln) + L-glutamine + ATP + H2O = L-glutaminyl-tRNA(Gln) + L-glutamate + ADP + phosphate + H(+). The catalysed reaction is L-aspartyl-tRNA(Asn) + L-glutamine + ATP + H2O = L-asparaginyl-tRNA(Asn) + L-glutamate + ADP + phosphate + 2 H(+). Functionally, allows the formation of correctly charged Asn-tRNA(Asn) or Gln-tRNA(Gln) through the transamidation of misacylated Asp-tRNA(Asn) or Glu-tRNA(Gln) in organisms which lack either or both of asparaginyl-tRNA or glutaminyl-tRNA synthetases. The reaction takes place in the presence of glutamine and ATP through an activated phospho-Asp-tRNA(Asn) or phospho-Glu-tRNA(Gln). The protein is Aspartyl/glutamyl-tRNA(Asn/Gln) amidotransferase subunit B of Rhizobium etli (strain CIAT 652).